A 401-amino-acid chain; its full sequence is Glutamyl-tRNA reductase (401 aa).

Residues 49–52, serine 92, 97–99, and glutamine 103 each bind substrate; these read TCNR and END. Catalysis depends on cysteine 50, which acts as the Nucleophile. Position 171–176 (171–176) interacts with NADP(+); that stretch reads GNGKMA.

The protein belongs to the glutamyl-tRNA reductase family. Homodimer.

It catalyses the reaction (S)-4-amino-5-oxopentanoate + tRNA(Glu) + NADP(+) = L-glutamyl-tRNA(Glu) + NADPH + H(+). Its pathway is porphyrin-containing compound metabolism; protoporphyrin-IX biosynthesis; 5-aminolevulinate from L-glutamyl-tRNA(Glu): step 1/2. Functionally, catalyzes the NADPH-dependent reduction of glutamyl-tRNA(Glu) to glutamate 1-semialdehyde (GSA). In Picrophilus torridus (strain ATCC 700027 / DSM 9790 / JCM 10055 / NBRC 100828 / KAW 2/3), this protein is Glutamyl-tRNA reductase.